A 428-amino-acid polypeptide reads, in one-letter code: Enolase (428 aa).

Gln163 lines the (2R)-2-phosphoglycerate pocket. Glu205 serves as the catalytic Proton donor. Mg(2+) contacts are provided by Asp242, Glu286, and Asp313. 4 residues coordinate (2R)-2-phosphoglycerate: Lys338, Arg367, Ser368, and Lys389. The active-site Proton acceptor is the Lys338.

It belongs to the enolase family. Mg(2+) serves as cofactor.

It is found in the cytoplasm. The protein localises to the secreted. The protein resides in the cell surface. It catalyses the reaction (2R)-2-phosphoglycerate = phosphoenolpyruvate + H2O. Its pathway is carbohydrate degradation; glycolysis; pyruvate from D-glyceraldehyde 3-phosphate: step 4/5. Catalyzes the reversible conversion of 2-phosphoglycerate (2-PG) into phosphoenolpyruvate (PEP). It is essential for the degradation of carbohydrates via glycolysis. The sequence is that of Enolase from Bordetella avium (strain 197N).